The following is a 610-amino-acid chain: UvrABC system protein C (610 aa).

In terms of domain architecture, GIY-YIG spans 16 to 94 (SQPGVYRMYD…IKLYQPRYNV (79 aa)). In terms of domain architecture, UVR spans 204–239 (QQVLTQLITRMEEASQQLHFEDAARIRDQIQAVRRV).

This sequence belongs to the UvrC family. Interacts with UvrB in an incision complex.

The protein resides in the cytoplasm. The UvrABC repair system catalyzes the recognition and processing of DNA lesions. UvrC both incises the 5' and 3' sides of the lesion. The N-terminal half is responsible for the 3' incision and the C-terminal half is responsible for the 5' incision. The sequence is that of UvrABC system protein C from Yersinia pseudotuberculosis serotype I (strain IP32953).